The chain runs to 125 residues: Large ribosomal subunit protein bL12 (125 aa).

The protein belongs to the bacterial ribosomal protein bL12 family. As to quaternary structure, homodimer. Part of the ribosomal stalk of the 50S ribosomal subunit. Forms a multimeric L10(L12)X complex, where L10 forms an elongated spine to which 2 to 4 L12 dimers bind in a sequential fashion. Binds GTP-bound translation factors.

In terms of biological role, forms part of the ribosomal stalk which helps the ribosome interact with GTP-bound translation factors. Is thus essential for accurate translation. The polypeptide is Large ribosomal subunit protein bL12 (Rickettsia felis (strain ATCC VR-1525 / URRWXCal2) (Rickettsia azadi)).